The primary structure comprises 717 residues: Fatty acid oxidation complex subunit alpha (717 aa).

An enoyl-CoA hydratase/isomerase region spans residues 1–190 (MIHAGNAITV…KDGAVDAVVA (190 aa)). Aspartate 298 is a binding site for substrate. The tract at residues 313-717 (HPVNQAAVLG…MAANNKKFYG (405 aa)) is 3-hydroxyacyl-CoA dehydrogenase. Residues methionine 326, aspartate 345, 402 to 404 (VTE), lysine 409, and serine 431 contribute to the NAD(+) site. Residue histidine 452 is the For 3-hydroxyacyl-CoA dehydrogenase activity of the active site. Asparagine 455 serves as a coordination point for NAD(+). Asparagine 502 contacts substrate.

It in the N-terminal section; belongs to the enoyl-CoA hydratase/isomerase family. In the C-terminal section; belongs to the 3-hydroxyacyl-CoA dehydrogenase family. Heterotetramer of two alpha chains (FadB) and two beta chains (FadA).

It catalyses the reaction a (3S)-3-hydroxyacyl-CoA + NAD(+) = a 3-oxoacyl-CoA + NADH + H(+). The enzyme catalyses a (3S)-3-hydroxyacyl-CoA = a (2E)-enoyl-CoA + H2O. It carries out the reaction a 4-saturated-(3S)-3-hydroxyacyl-CoA = a (3E)-enoyl-CoA + H2O. The catalysed reaction is (3S)-3-hydroxybutanoyl-CoA = (3R)-3-hydroxybutanoyl-CoA. It catalyses the reaction a (3Z)-enoyl-CoA = a 4-saturated (2E)-enoyl-CoA. The enzyme catalyses a (3E)-enoyl-CoA = a 4-saturated (2E)-enoyl-CoA. Its pathway is lipid metabolism; fatty acid beta-oxidation. Functionally, involved in the aerobic and anaerobic degradation of long-chain fatty acids via beta-oxidation cycle. Catalyzes the formation of 3-oxoacyl-CoA from enoyl-CoA via L-3-hydroxyacyl-CoA. It can also use D-3-hydroxyacyl-CoA and cis-3-enoyl-CoA as substrate. This Acinetobacter baumannii (strain ACICU) protein is Fatty acid oxidation complex subunit alpha.